Consider the following 199-residue polypeptide: dITP/XTP pyrophosphatase (199 aa).

Residue 7-12 participates in substrate binding; that stretch reads SNNRGK. Residues Asp-39 and Asp-68 each coordinate Mg(2+). The active-site Proton acceptor is Asp-68. Substrate is bound by residues Ala-69, 154–157, Lys-177, and 182–183; these read FGFD and HR.

The protein belongs to the HAM1 NTPase family. As to quaternary structure, homodimer. The cofactor is Mg(2+).

The enzyme catalyses XTP + H2O = XMP + diphosphate + H(+). It carries out the reaction dITP + H2O = dIMP + diphosphate + H(+). It catalyses the reaction ITP + H2O = IMP + diphosphate + H(+). Functionally, pyrophosphatase that catalyzes the hydrolysis of nucleoside triphosphates to their monophosphate derivatives, with a high preference for the non-canonical purine nucleotides XTP (xanthosine triphosphate), dITP (deoxyinosine triphosphate) and ITP. Seems to function as a house-cleaning enzyme that removes non-canonical purine nucleotides from the nucleotide pool, thus preventing their incorporation into DNA/RNA and avoiding chromosomal lesions. The protein is dITP/XTP pyrophosphatase of Paracidovorax citrulli (strain AAC00-1) (Acidovorax citrulli).